The chain runs to 669 residues: Trifunctional UDP-glucose 4,6-dehydratase/UDP-4-keto-6-deoxy-D-glucose 3,5-epimerase/UDP-4-keto-L-rhamnose-reductase RHM1 (669 aa).

13 to 19 (GAAGFIA) contacts NAD(+). Threonine 132 is a binding site for substrate. Aspartate 133 (proton donor) is an active-site residue. Catalysis depends on proton acceptor residues glutamate 134 and tyrosine 159. 391 to 397 (GKTGWIG) serves as a coordination point for NADP(+).

It in the N-terminal section; belongs to the NAD(P)-dependent epimerase/dehydratase family. dTDP-glucose dehydratase subfamily. The protein in the C-terminal section; belongs to the dTDP-4-dehydrorhamnose reductase family. It depends on NAD(+) as a cofactor. NADP(+) is required as a cofactor. Expressed in roots, stems, leaves, seedlings, inflorescence tips, and siliques. Detected in the adaxial side of cotyledons, in the emerging leaves and in trichomes. Also detected in the root tip, more precisely in the epidermal cells in the meristematic and elongation zone.

The protein localises to the cytoplasm. It is found in the cytosol. It catalyses the reaction UDP-alpha-D-glucose = UDP-4-dehydro-6-deoxy-alpha-D-glucose + H2O. The protein operates within carbohydrate biosynthesis. Functionally, trifunctional enzyme involved in UDP-beta-L-rhamnose biosynthesis, a precursor of the primary cell wall components rhamnogalacturonan I (RG-I) and rhamnogalacturonan II (RG-II). Plays a major role in supplying UDP-rhamnose for flavonol biosynthesis. Catalyzes the dehydration of UDP-glucose to form UDP-4-dehydro-6-deoxy-D-glucose followed by the epimerization of the C3' and C5' positions of UDP-4-dehydro-6-deoxy-D-glucose to form UDP-4-keto-beta-L-rhamnose and the reduction of UDP-4-keto-beta-L-rhamnose to yield UDP-beta-L-rhamnose. This Arabidopsis thaliana (Mouse-ear cress) protein is Trifunctional UDP-glucose 4,6-dehydratase/UDP-4-keto-6-deoxy-D-glucose 3,5-epimerase/UDP-4-keto-L-rhamnose-reductase RHM1.